The sequence spans 276 residues: Putative pyruvate, phosphate dikinase regulatory protein (276 aa).

ADP is bound at residue 154 to 161 (GVSRTSKS).

It belongs to the pyruvate, phosphate/water dikinase regulatory protein family. PDRP subfamily.

The catalysed reaction is N(tele)-phospho-L-histidyl/L-threonyl-[pyruvate, phosphate dikinase] + ADP = N(tele)-phospho-L-histidyl/O-phospho-L-threonyl-[pyruvate, phosphate dikinase] + AMP + H(+). It catalyses the reaction N(tele)-phospho-L-histidyl/O-phospho-L-threonyl-[pyruvate, phosphate dikinase] + phosphate + H(+) = N(tele)-phospho-L-histidyl/L-threonyl-[pyruvate, phosphate dikinase] + diphosphate. Its function is as follows. Bifunctional serine/threonine kinase and phosphorylase involved in the regulation of the pyruvate, phosphate dikinase (PPDK) by catalyzing its phosphorylation/dephosphorylation. The protein is Putative pyruvate, phosphate dikinase regulatory protein of Wolbachia pipientis wMel.